Here is a 108-residue protein sequence, read N- to C-terminus: UPF0145 protein AF_0869 (108 aa).

The protein belongs to the UPF0145 family.

The polypeptide is UPF0145 protein AF_0869 (Archaeoglobus fulgidus (strain ATCC 49558 / DSM 4304 / JCM 9628 / NBRC 100126 / VC-16)).